A 235-amino-acid chain; its full sequence is MLIRNYRGLLGTKLGMTQVWDANNRVVPVTVIKAGPNVVTQVKTPDSDGYSAVQLGYGEVDPRKINKPARGHFATSGVTPRRHLVELRTADAGNYRPGQELTGEVFSAGTVVDVTGTSKGKGFAGVMKRHGFKGLGAGHGVERKHRSPGSVGGCATPGRVFKGLRMAGRMGHVRTTTSGLTIHAVDTERGYLLVRGAVPGPDGGLVLVRSAAKRPAPEAIAPAAELAGTGEEVSA.

Belongs to the universal ribosomal protein uL3 family. Part of the 50S ribosomal subunit. Forms a cluster with proteins L14 and L19.

One of the primary rRNA binding proteins, it binds directly near the 3'-end of the 23S rRNA, where it nucleates assembly of the 50S subunit. This Frankia casuarinae (strain DSM 45818 / CECT 9043 / HFP020203 / CcI3) protein is Large ribosomal subunit protein uL3.